Reading from the N-terminus, the 474-residue chain is Glutamate--tRNA ligase (474 aa).

A 'HIGH' region motif is present at residues 10–20; the sequence is PSPTGYLHIGG. Cysteine 107, cysteine 109, cysteine 134, and aspartate 136 together coordinate Zn(2+). Residues 244-248 carry the 'KMSKS' region motif; it reads RLSKR. Residue lysine 247 participates in ATP binding.

This sequence belongs to the class-I aminoacyl-tRNA synthetase family. Glutamate--tRNA ligase type 1 subfamily. Monomer. Zn(2+) serves as cofactor.

The protein localises to the cytoplasm. The enzyme catalyses tRNA(Glu) + L-glutamate + ATP = L-glutamyl-tRNA(Glu) + AMP + diphosphate. Its function is as follows. Catalyzes the attachment of glutamate to tRNA(Glu) in a two-step reaction: glutamate is first activated by ATP to form Glu-AMP and then transferred to the acceptor end of tRNA(Glu). The chain is Glutamate--tRNA ligase from Anaeromyxobacter sp. (strain K).